A 203-amino-acid polypeptide reads, in one-letter code: Outer-membrane lipoprotein carrier protein (203 aa).

Residues 1-21 form the signal peptide; that stretch reads MKKLIISCCLLATFSAAGAWA. Residues 174 to 203 form a disordered region; it reads ALKSQQSGPISADKFKFRPPKGVTVDDQRQ.

Belongs to the LolA family. In terms of assembly, monomer.

The protein resides in the periplasm. Functionally, participates in the translocation of lipoproteins from the inner membrane to the outer membrane. Only forms a complex with a lipoprotein if the residue after the N-terminal Cys is not an aspartate (The Asp acts as a targeting signal to indicate that the lipoprotein should stay in the inner membrane). The polypeptide is Outer-membrane lipoprotein carrier protein (Erwinia tasmaniensis (strain DSM 17950 / CFBP 7177 / CIP 109463 / NCPPB 4357 / Et1/99)).